The following is a 107-amino-acid chain: Nucleoid-associated protein Msil_0275 (107 aa).

The protein belongs to the YbaB/EbfC family. In terms of assembly, homodimer.

The protein localises to the cytoplasm. It is found in the nucleoid. Functionally, binds to DNA and alters its conformation. May be involved in regulation of gene expression, nucleoid organization and DNA protection. This is Nucleoid-associated protein Msil_0275 from Methylocella silvestris (strain DSM 15510 / CIP 108128 / LMG 27833 / NCIMB 13906 / BL2).